The sequence spans 80 residues: Clavanin-E (80 aa).

The N-terminal stretch at M1–S19 is a signal peptide. A propeptide spanning residues L20–K29 is cleaved from the precursor. The residue at position 52 (F52) is a Phenylalanine amide. Residues D54–Q80 constitute a propeptide that is removed on maturation.

Its subcellular location is the secreted. In terms of biological role, has antimicrobial activity. This is Clavanin-E from Styela clava (Sea squirt).